The sequence spans 264 residues: Zinc finger protein CG30 (264 aa).

An RING-type zinc finger spans residues 8–63; it reads CNICFSVAEIKNYFLQPIDRLTIIPVLELDTCKHQLCSMCIRKIRKRKKVPCPLCR.

The protein localises to the host nucleus. Functionally, plays a role in the proper expression of late and very late genes. The sequence is that of Zinc finger protein CG30 (CG30) from Autographa californica nuclear polyhedrosis virus (AcMNPV).